The chain runs to 638 residues: ATP-dependent zinc metalloprotease FtsH (638 aa).

Residues 1–7 (MRSTYKT) lie on the Cytoplasmic side of the membrane. The helical transmembrane segment at 8–28 (IGLWVILIVLFVAFYNFFSQG) threads the bilayer. At 29–102 (NDQVQEPSFT…KYEREEQNSL (74 aa)) the chain is on the periplasmic side. Residues 103–123 (WLTILGQWMPVVFLFLFFIFF) form a helical membrane-spanning segment. The Cytoplasmic segment spans residues 124–638 (MRQLQGGSGK…GLPAMEPKKA (515 aa)). Position 195 to 202 (195 to 202 (GSPGTGKT)) interacts with ATP. Histidine 417 provides a ligand contact to Zn(2+). The active site involves glutamate 418. Histidine 421 and aspartate 493 together coordinate Zn(2+). The disordered stretch occupies residues 596-638 (GGQLTRERPPPRVNAPPKATEKKDKRKILDALEGLPAMEPKKA). A compositionally biased stretch (basic and acidic residues) spans 614–625 (ATEKKDKRKILD).

The protein in the central section; belongs to the AAA ATPase family. It in the C-terminal section; belongs to the peptidase M41 family. Homohexamer. Requires Zn(2+) as cofactor.

The protein resides in the cell inner membrane. Its function is as follows. Acts as a processive, ATP-dependent zinc metallopeptidase for both cytoplasmic and membrane proteins. Plays a role in the quality control of integral membrane proteins. The chain is ATP-dependent zinc metalloprotease FtsH from Myxococcus xanthus (strain DK1622).